Reading from the N-terminus, the 47-residue chain is Large ribosomal subunit protein bL34 (47 aa).

Belongs to the bacterial ribosomal protein bL34 family.

This chain is Large ribosomal subunit protein bL34, found in Mycolicibacterium vanbaalenii (strain DSM 7251 / JCM 13017 / BCRC 16820 / KCTC 9966 / NRRL B-24157 / PYR-1) (Mycobacterium vanbaalenii).